We begin with the raw amino-acid sequence, 109 residues long: DNA-directed RNA polymerase subunit I (109 aa).

The catalysed reaction is RNA(n) + a ribonucleoside 5'-triphosphate = RNA(n+1) + diphosphate. Its function is as follows. DNA-dependent RNA polymerase catalyzes the transcription of DNA into RNA using the four ribonucleoside triphosphates as substrates. This chain is DNA-directed RNA polymerase subunit I (rpoI), found in Methanocaldococcus jannaschii (strain ATCC 43067 / DSM 2661 / JAL-1 / JCM 10045 / NBRC 100440) (Methanococcus jannaschii).